A 148-amino-acid chain; its full sequence is UPF0756 membrane protein NMCC_1816 (148 aa).

A run of 4 helical transmembrane segments spans residues Leu13–Met35, His50–Gly70, Phe80–Gly100, and Val121–Leu141.

It belongs to the UPF0756 family.

The protein localises to the cell membrane. The protein is UPF0756 membrane protein NMCC_1816 of Neisseria meningitidis serogroup C (strain 053442).